Reading from the N-terminus, the 1500-residue chain is Rho GTPase-activating protein 35 (1500 aa).

The tract at residues 1–266 is has GTPase activity, required for proper localization; that stretch reads MMMARKQDVR…IPYFEALKQQ (266 aa). Residues Lys-28, 33–37, Leu-52, Ser-56, 95–97, 201–203, and 229–231 contribute to the GTP site; these read IGKSC, EQT, KCD, and SAR. FF domains follow at residues 270–327, 368–422, 429–483, and 485–550; these read IATA…HIHR, KLLE…HLEK, RAEM…HQKQ, and IDKA…HIHF. Phosphotyrosine is present on Tyr-308. Position 589 is a phosphoserine (Ser-589). The pG1 pseudoGTPase domain occupies 592-767; sequence DPNIDRINLV…LLDSKRNLNL (176 aa). Residues Ser-770 and Ser-773 each carry the phosphoserine modification. The pG2 pseudoGTPase domain maps to 783-947; the sequence is RIVMCLMCGD…FKDVVDKKNI (165 aa). 5 positions are modified to phosphoserine: Ser-970, Ser-975, Ser-985, Ser-1002, and Ser-1073. Positions 970–989 are disordered; that stretch reads SPRAGSPLCNSNLQDSEEDI. A disordered region spans residues 1058 to 1090; sequence SYLDQGHRDGQRKSVSSSTWLPPDGFDPSDYAE. At Tyr-1088 the chain carries Phosphotyrosine. Phosphotyrosine; by ABL2 and PTK6 is present on Tyr-1106. The segment covering 1125–1142 has biased composition (polar residues); sequence KAQSNGSGNGSDSEMDTS. Residues 1125–1147 are disordered; it reads KAQSNGSGNGSDSEMDTSSLERG. Residues Ser-1135, Ser-1143, Ser-1151, Ser-1177, Ser-1180, and Ser-1222 each carry the phosphoserine modification. The segment at 1178 to 1208 is disordered; it reads VGSDDELGPIRKKEEDQASQGYKGDNAVIPY. Residues 1214-1237 are required for phospholipid binding and regulation of the substrate preference; that stretch reads PRRRNILRSLRRNTKKPKPKPRPS. Thr-1227 bears the Phosphothreonine mark. Ser-1237 is subject to Phosphoserine. The 188-residue stretch at 1250 to 1437 folds into the Rho-GAP domain; sequence VPLTTVVTPE…LFIQQCPFFF (188 aa). The segment at 1444 to 1500 is disordered; the sequence is EPPGATPSSPSAVASTVPFLTSTPVTSQPSPPQSPPPTPQSPMQALLPSQLQAEHTL. The span at 1449 to 1471 shows a compositional bias: low complexity; that stretch reads TPSSPSAVASTVPFLTSTPVTSQ. Residues 1472-1483 are compositionally biased toward pro residues; that stretch reads PSPPQSPPPTPQ. 2 positions are modified to phosphoserine: Ser-1473 and Ser-1477. Thr-1481 is modified (phosphothreonine). Phosphoserine is present on Ser-1484. Residues 1490–1500 are compositionally biased toward polar residues; sequence LPSQLQAEHTL.

In terms of assembly, interacts with RASA1. Interacts with the general transcription factor GTF2I, the interaction sequesters GTF2I in the cytoplasm. Post-translationally, phosphorylation of Tyr-1106 by PTK6 promotes the association with RASA1, inactivating RHOA while activating RAS. Phosphorylation at Tyr-308 by PDGFRA inhibits binding to GTF2I. Phosphorylated by PRKCA at Ser-1222 and Thr-1227, induces relocalization from the cytoplasm to regions of plasma membrane ruffling and prevents the binding and substrate specificity regulation by phospholipids. In brain, phosphorylated by FYN and SRC. During focal adhesion formation, phosphorylated by MAPK1 and MAPK3 at the C-terminal region, probably at Ser-1452, Ser-1477, Thr-1481 and Ser-1484. Phosphorylation by MAPK1 and MAPK3 inhibits GAP function and localizes ARGHAP35 away from newly forming focal adhesions and stress fibers in cells spreading on fibronectin. Phosphorylation at Ser-1477 and Thr-1481 by GSK3B requires priming by MAPK and inhibits RhoGAP activity and modulates polarized cell migration. In terms of tissue distribution, strongly expressed in retina (photoreceptor layer) and brain. Expression is maximal in the occipital, frontal, temporal lobe and also the cerebellum. Medium expression in the medulla and also in kidney, lung, liver, heart and spleen.

The protein resides in the cytoplasm. Its subcellular location is the cytoskeleton. It is found in the cilium basal body. The protein localises to the nucleus. It localises to the cell membrane. In terms of biological role, rho GTPase-activating protein (GAP). Binds several acidic phospholipids which inhibits the Rho GAP activity to promote the Rac GAP activity. This binding is inhibited by phosphorylation by PRKCA. Involved in cell differentiation as well as cell adhesion and migration, plays an important role in retinal tissue morphogenesis, neural tube fusion, midline fusion of the cerebral hemispheres and mammary gland branching morphogenesis. Transduces signals from p21-ras to the nucleus, acting via the ras GTPase-activating protein (GAP). Transduces SRC-dependent signals from cell-surface adhesion molecules, such as laminin, to promote neurite outgrowth. Regulates axon outgrowth, guidance and fasciculation. Modulates Rho GTPase-dependent F-actin polymerization, organization and assembly, is involved in polarized cell migration and in the positive regulation of ciliogenesis and cilia elongation. During mammary gland development, is required in both the epithelial and stromal compartments for ductal outgrowth. Represses transcription of the glucocorticoid receptor by binding to the cis-acting regulatory sequence 5'-GAGAAAAGAAACTGGAGAAACTC-3'; this function is however unclear and would need additional experimental evidences. In Canis lupus familiaris (Dog), this protein is Rho GTPase-activating protein 35.